The sequence spans 1030 residues: uncharacterized protein (1030 aa).

Residues 51-86 (IKVSFTAKDGELTCKCSCLANVDNCVHIVAVLLKYH) form an SWIM-type zinc finger. The region spanning 590-751 (RGLEENKFGG…WSCFDFVLPS (162 aa)) is the Helicase ATP-binding domain. 603-610 (DEMGLGKT) serves as a coordination point for ATP. Positions 702–705 (DEAQ) match the DEAQ box motif. The Helicase C-terminal domain occupies 867-1021 (ALEIIHEAIE…EDVNFFESLT (155 aa)).

The protein belongs to the SNF2/RAD54 helicase family.

This is an uncharacterized protein from Mycoplasma pneumoniae (strain ATCC 29342 / M129 / Subtype 1) (Mycoplasmoides pneumoniae).